The primary structure comprises 720 residues: Serine/threonine-protein kinase KIN82 (720 aa).

Polar residues-rich tracts occupy residues 1–13 and 99–116; these read MTQQ…SQRL and FNHN…STSE. Disordered stretches follow at residues 1–20 and 99–128; these read MTQQ…RSMS and FNHN…RSTI. Ser203 bears the Phosphoserine mark. Residues 230 to 241 show a composition bias toward low complexity; that stretch reads SPLANLSLSNSP. The segment at 230–257 is disordered; the sequence is SPLANLSLSNSPIDSPRKNSETRKDQIP. Residues 244-255 show a composition bias toward basic and acidic residues; sequence SPRKNSETRKDQ. Residues 324–602 enclose the Protein kinase domain; that stretch reads FEKIRLLGQG…AADIKRHPFF (279 aa). Residues 330 to 338 and Lys353 each bind ATP; that span reads LGQGDVGKV. Asp449 (proton acceptor) is an active-site residue.

It belongs to the protein kinase superfamily. Ser/Thr protein kinase family. KIN82 subfamily.

The catalysed reaction is L-seryl-[protein] + ATP = O-phospho-L-seryl-[protein] + ADP + H(+). The enzyme catalyses L-threonyl-[protein] + ATP = O-phospho-L-threonyl-[protein] + ADP + H(+). Functionally, flippase activator that phosphorylates DFN1 and DFN2 and which is involved in the generation of phospholipid asymmetry in membranes by the inward translocation of phospholipids. This chain is Serine/threonine-protein kinase KIN82 (KIN82), found in Saccharomyces cerevisiae (strain ATCC 204508 / S288c) (Baker's yeast).